Reading from the N-terminus, the 396-residue chain is 1-deoxy-D-xylulose 5-phosphate reductoisomerase (396 aa).

NADPH contacts are provided by Thr-10, Gly-11, Ser-12, Ile-13, and Asn-123. 1-deoxy-D-xylulose 5-phosphate is bound at residue Lys-124. Position 125 (Glu-125) interacts with NADPH. Asp-149 is a Mn(2+) binding site. 1-deoxy-D-xylulose 5-phosphate is bound by residues Ser-150, Glu-151, Ser-185, and His-208. Residue Glu-151 coordinates Mn(2+). Residue Gly-214 participates in NADPH binding. 1-deoxy-D-xylulose 5-phosphate-binding residues include Ser-221, Asn-226, Lys-227, and Glu-230. Residue Glu-230 participates in Mn(2+) binding.

It belongs to the DXR family. Mg(2+) is required as a cofactor. It depends on Mn(2+) as a cofactor.

It carries out the reaction 2-C-methyl-D-erythritol 4-phosphate + NADP(+) = 1-deoxy-D-xylulose 5-phosphate + NADPH + H(+). The protein operates within isoprenoid biosynthesis; isopentenyl diphosphate biosynthesis via DXP pathway; isopentenyl diphosphate from 1-deoxy-D-xylulose 5-phosphate: step 1/6. Functionally, catalyzes the NADPH-dependent rearrangement and reduction of 1-deoxy-D-xylulose-5-phosphate (DXP) to 2-C-methyl-D-erythritol 4-phosphate (MEP). The sequence is that of 1-deoxy-D-xylulose 5-phosphate reductoisomerase from Shewanella baltica (strain OS155 / ATCC BAA-1091).